A 575-amino-acid chain; its full sequence is Septation ring formation regulator EzrA (575 aa).

Over 1–8 the chain is Extracellular; it reads MSNGQLIY. Residues 9–27 traverse the membrane as a helical segment; sequence LMVAIAVILVLAYVVAIFL. Residues 28 to 575 lie on the Cytoplasmic side of the membrane; that stretch reads RKRNEGRLEA…YEKTRETIRF (548 aa). Coiled-coil stretches lie at residues 110-191, 265-301, 354-416, and 456-526; these read QIDQ…FVTL, LYEAFKKNQENIRQLELDNAEYENGQAQEEINALYDI, VRRI…IEKD, and TASN…IQEA.

This sequence belongs to the EzrA family.

It localises to the cell membrane. Its function is as follows. Negative regulator of FtsZ ring formation; modulates the frequency and position of FtsZ ring formation. Inhibits FtsZ ring formation at polar sites. Interacts either with FtsZ or with one of its binding partners to promote depolymerization. In Streptococcus pneumoniae (strain JJA), this protein is Septation ring formation regulator EzrA.